The sequence spans 129 residues: uncharacterized protein (129 aa).

It localises to the cytoplasm. Its subcellular location is the cytosol. It is found in the nucleus. This is an uncharacterized protein from Schizosaccharomyces pombe (strain 972 / ATCC 24843) (Fission yeast).